A 375-amino-acid polypeptide reads, in one-letter code: Tubulinyl-Tyr carboxypeptidase 1 (375 aa).

The segment covering 1–33 has biased composition (low complexity); the sequence is MPGGKKVVPSGSSSASPNAAATTTAAAAAAAAA. The disordered stretch occupies residues 1–69; it reads MPGGKKVVPS…EEDLRDGGVP (69 aa). A compositionally biased stretch (acidic residues) spans 53–63; that stretch reads EEPEEEGEEDL. Active-site residues include C179, H214, and S231. A disordered region spans residues 309–375; sequence RDMRLKIGKG…PDLSGYQIRV (67 aa). Positions 329–375 are involved in heparin-binding and antiangiogenic activity; sequence KKDVSSPQRAQSSPHRRNSRSERRPSGEKKPAEPKAMPDLSGYQIRV. Positions 347–361 are enriched in basic and acidic residues; the sequence is SRSERRPSGEKKPAE.

Belongs to the transglutaminase-like superfamily. Vasohibin family. As to quaternary structure, interacts with SVBP; interaction enhances VASH1 tyrosine carboxypeptidase activity. Post-translationally, ubiquitinated in vitro. In terms of tissue distribution, expressed at low level in proliferating endothelial cells at the sprouting front but highly expressed in nonproliferating endothelial cells in the termination zone.

The protein localises to the cytoplasm. The protein resides in the secreted. The catalysed reaction is C-terminal L-alpha-aminoacyl-L-glutamyl-L-glutamyl-L-tyrosyl-[tubulin] + H2O = C-terminal L-alpha-aminoacyl-L-glutamyl-L-glutamyl-[tubulin] + L-tyrosine. Functionally, tyrosine carboxypeptidase that removes the C-terminal tyrosine residue of alpha-tubulin, thereby regulating microtubule dynamics and function. Acts as an angiogenesis inhibitor: inhibits migration, proliferation and network formation by endothelial cells as well as angiogenesis. This inhibitory effect is selective to endothelial cells as it does not affect the migration of smooth muscle cells or fibroblasts. In Mus musculus (Mouse), this protein is Tubulinyl-Tyr carboxypeptidase 1.